A 106-amino-acid chain; its full sequence is Protein translation factor SUI1 homolog (106 aa).

This sequence belongs to the SUI1 family.

In Methanopyrus kandleri (strain AV19 / DSM 6324 / JCM 9639 / NBRC 100938), this protein is Protein translation factor SUI1 homolog.